Here is a 586-residue protein sequence, read N- to C-terminus: NudC domain-containing protein 1 (586 aa).

A disordered region spans residues 259–278; it reads KDQPESSEDEKMDEDNKREP. Residues 275–364 enclose the CS domain; sequence KREPLYNWHQ…EPGSTWAELV (90 aa).

The protein localises to the cytoplasm. It is found in the nucleus. This is NudC domain-containing protein 1 from Xenopus tropicalis (Western clawed frog).